The following is an 817-amino-acid chain: Lon protease 1 (817 aa).

One can recognise a Lon N-terminal domain in the interval Val18–Ile216. An ATP-binding site is contributed by Gly368 to Thr375. The region spanning Glu604–Leu785 is the Lon proteolytic domain. Residues Ser691 and Lys734 contribute to the active site. The segment at Glu789–Ala817 is disordered.

It belongs to the peptidase S16 family. As to quaternary structure, homohexamer. Organized in a ring with a central cavity.

The protein localises to the cytoplasm. The catalysed reaction is Hydrolysis of proteins in presence of ATP.. Functionally, ATP-dependent serine protease that mediates the selective degradation of mutant and abnormal proteins as well as certain short-lived regulatory proteins. Required for cellular homeostasis and for survival from DNA damage and developmental changes induced by stress. Degrades polypeptides processively to yield small peptide fragments that are 5 to 10 amino acids long. Binds to DNA in a double-stranded, site-specific manner. The chain is Lon protease 1 from Myxococcus xanthus.